The chain runs to 550 residues: Glucose-6-phosphate isomerase (550 aa).

The active-site Proton donor is E355. Catalysis depends on residues H386 and K512.

The protein belongs to the GPI family.

It localises to the cytoplasm. The catalysed reaction is alpha-D-glucose 6-phosphate = beta-D-fructose 6-phosphate. Its pathway is carbohydrate biosynthesis; gluconeogenesis. It functions in the pathway carbohydrate degradation; glycolysis; D-glyceraldehyde 3-phosphate and glycerone phosphate from D-glucose: step 2/4. Functionally, catalyzes the reversible isomerization of glucose-6-phosphate to fructose-6-phosphate. The protein is Glucose-6-phosphate isomerase of Rhodococcus opacus (strain B4).